Here is a 156-residue protein sequence, read N- to C-terminus: Large ribosomal subunit protein uL15 (156 aa).

Residues 14 to 35 (GSRTHGWGRVGQHRKSGSSGGK) are disordered.

This sequence belongs to the universal ribosomal protein uL15 family. Part of the 50S ribosomal subunit.

Binds to the 23S rRNA. The sequence is that of Large ribosomal subunit protein uL15 from Pyrobaculum islandicum (strain DSM 4184 / JCM 9189 / GEO3).